The following is a 324-amino-acid chain: Leucine carboxyl methyltransferase 1 (324 aa).

S-adenosyl-L-methionine contacts are provided by residues Arg-74, Gly-101, Asp-128, 172-173 (DL), and Glu-196.

The protein belongs to the methyltransferase superfamily. LCMT family.

It catalyses the reaction [phosphatase 2A protein]-C-terminal L-leucine + S-adenosyl-L-methionine = [phosphatase 2A protein]-C-terminal L-leucine methyl ester + S-adenosyl-L-homocysteine. Functionally, methylates the carboxyl group of the C-terminal leucine residue of protein phosphatase 2A catalytic subunits to form alpha-leucine ester residues. This Yarrowia lipolytica (strain CLIB 122 / E 150) (Yeast) protein is Leucine carboxyl methyltransferase 1 (PPM1).